Consider the following 552-residue polypeptide: TBCC domain-containing protein 1 (552 aa).

Positions 304-435 constitute a C-CAP/cofactor C-like domain; sequence PRLHRIVVMS…LEDHMARTGL (132 aa).

The protein belongs to the TBCC family. In terms of tissue distribution, expressed in brain and testis (at protein level).

The protein resides in the cytoplasm. Its subcellular location is the cytoskeleton. The protein localises to the microtubule organizing center. It localises to the centrosome. It is found in the spindle pole. In terms of biological role, plays a role in the regulation of centrosome and Golgi apparatus positioning, with consequences on cell shape and cell migration. This Mus musculus (Mouse) protein is TBCC domain-containing protein 1 (Tbccd1).